The sequence spans 392 residues: Probable glucan endo-1,6-beta-glucosidase B (392 aa).

The first 18 residues, 1 to 18, serve as a signal peptide directing secretion; the sequence is MKVTRLAVLNTLATLTVA. Asn31 carries an N-linked (GlcNAc...) asparagine glycan. Glu220 functions as the Proton donor in the catalytic mechanism. Glu322 acts as the Nucleophile in catalysis.

This sequence belongs to the glycosyl hydrolase 5 (cellulase A) family.

It localises to the secreted. The enzyme catalyses Random hydrolysis of (1-&gt;6)-linkages in (1-&gt;6)-beta-D-glucans.. In terms of biological role, beta-glucanases participate in the metabolism of beta-glucan, the main structural component of the cell wall. Acts on lutean, pustulan and 1,6-oligo-beta-D-glucosides. The protein is Probable glucan endo-1,6-beta-glucosidase B (exgB) of Aspergillus flavus (strain ATCC 200026 / FGSC A1120 / IAM 13836 / NRRL 3357 / JCM 12722 / SRRC 167).